The sequence spans 126 residues: Holo-[acyl-carrier-protein] synthase (126 aa).

Residues Asp-9 and Glu-58 each contribute to the Mg(2+) site.

Belongs to the P-Pant transferase superfamily. AcpS family. Mg(2+) serves as cofactor.

It is found in the cytoplasm. The enzyme catalyses apo-[ACP] + CoA = holo-[ACP] + adenosine 3',5'-bisphosphate + H(+). Its function is as follows. Transfers the 4'-phosphopantetheine moiety from coenzyme A to a Ser of acyl-carrier-protein. In Escherichia coli O127:H6 (strain E2348/69 / EPEC), this protein is Holo-[acyl-carrier-protein] synthase.